The following is a 440-amino-acid chain: Thymidine phosphorylase (440 aa).

The protein belongs to the thymidine/pyrimidine-nucleoside phosphorylase family. As to quaternary structure, homodimer.

It catalyses the reaction thymidine + phosphate = 2-deoxy-alpha-D-ribose 1-phosphate + thymine. Its pathway is pyrimidine metabolism; dTMP biosynthesis via salvage pathway; dTMP from thymine: step 1/2. In terms of biological role, the enzymes which catalyze the reversible phosphorolysis of pyrimidine nucleosides are involved in the degradation of these compounds and in their utilization as carbon and energy sources, or in the rescue of pyrimidine bases for nucleotide synthesis. In Enterobacter sp. (strain 638), this protein is Thymidine phosphorylase.